Here is a 124-residue protein sequence, read N- to C-terminus: Large ribosomal subunit protein bL12 (124 aa).

This sequence belongs to the bacterial ribosomal protein bL12 family. Homodimer. Part of the ribosomal stalk of the 50S ribosomal subunit. Forms a multimeric L10(L12)X complex, where L10 forms an elongated spine to which 2 to 4 L12 dimers bind in a sequential fashion. Binds GTP-bound translation factors.

Its function is as follows. Forms part of the ribosomal stalk which helps the ribosome interact with GTP-bound translation factors. Is thus essential for accurate translation. The protein is Large ribosomal subunit protein bL12 of Idiomarina loihiensis (strain ATCC BAA-735 / DSM 15497 / L2-TR).